The chain runs to 70 residues: ATP synthase subunit c (70 aa).

2 helical membrane passes run 1–21 (MNFL…SYGN) and 47–67 (FIGV…SFLI).

Belongs to the ATPase C chain family. In terms of assembly, F-type ATPases have 2 components, F(1) - the catalytic core - and F(0) - the membrane proton channel. F(1) has five subunits: alpha(3), beta(3), gamma(1), delta(1), epsilon(1). F(0) has three main subunits: a(1), b(2) and c(10-14). The alpha and beta chains form an alternating ring which encloses part of the gamma chain. F(1) is attached to F(0) by a central stalk formed by the gamma and epsilon chains, while a peripheral stalk is formed by the delta and b chains.

It is found in the cell membrane. Its function is as follows. F(1)F(0) ATP synthase produces ATP from ADP in the presence of a proton or sodium gradient. F-type ATPases consist of two structural domains, F(1) containing the extramembraneous catalytic core and F(0) containing the membrane proton channel, linked together by a central stalk and a peripheral stalk. During catalysis, ATP synthesis in the catalytic domain of F(1) is coupled via a rotary mechanism of the central stalk subunits to proton translocation. In terms of biological role, key component of the F(0) channel; it plays a direct role in translocation across the membrane. A homomeric c-ring of between 10-14 subunits forms the central stalk rotor element with the F(1) delta and epsilon subunits. The polypeptide is ATP synthase subunit c (Latilactobacillus sakei subsp. sakei (strain 23K) (Lactobacillus sakei subsp. sakei)).